A 626-amino-acid polypeptide reads, in one-letter code: 1-deoxy-D-xylulose-5-phosphate synthase 2 (626 aa).

Residues His-74 and 115–117 each bind thiamine diphosphate; that span reads GHA. Asp-146 lines the Mg(2+) pocket. Residues 147 to 148, Asn-175, Phe-286, and Glu-368 each bind thiamine diphosphate; that span reads GS. Position 175 (Asn-175) interacts with Mg(2+).

The protein belongs to the transketolase family. DXPS subfamily. Homodimer. The cofactor is Mg(2+). Thiamine diphosphate is required as a cofactor.

It carries out the reaction D-glyceraldehyde 3-phosphate + pyruvate + H(+) = 1-deoxy-D-xylulose 5-phosphate + CO2. It functions in the pathway metabolic intermediate biosynthesis; 1-deoxy-D-xylulose 5-phosphate biosynthesis; 1-deoxy-D-xylulose 5-phosphate from D-glyceraldehyde 3-phosphate and pyruvate: step 1/1. Its function is as follows. Catalyzes the acyloin condensation reaction between C atoms 2 and 3 of pyruvate and glyceraldehyde 3-phosphate to yield 1-deoxy-D-xylulose-5-phosphate (DXP). The protein is 1-deoxy-D-xylulose-5-phosphate synthase 2 of Geobacter sulfurreducens (strain ATCC 51573 / DSM 12127 / PCA).